Consider the following 483-residue polypeptide: Glutamyl-tRNA(Gln) amidotransferase subunit A (483 aa).

Active-site charge relay system residues include K76 and S151. The Acyl-ester intermediate role is filled by S175.

It belongs to the amidase family. GatA subfamily. Heterotrimer of A, B and C subunits.

The catalysed reaction is L-glutamyl-tRNA(Gln) + L-glutamine + ATP + H2O = L-glutaminyl-tRNA(Gln) + L-glutamate + ADP + phosphate + H(+). Its function is as follows. Allows the formation of correctly charged Gln-tRNA(Gln) through the transamidation of misacylated Glu-tRNA(Gln) in organisms which lack glutaminyl-tRNA synthetase. The reaction takes place in the presence of glutamine and ATP through an activated gamma-phospho-Glu-tRNA(Gln). The sequence is that of Glutamyl-tRNA(Gln) amidotransferase subunit A from Pseudomonas fluorescens (strain Pf0-1).